We begin with the raw amino-acid sequence, 208 residues long: ATP-dependent Clp protease proteolytic subunit (208 aa).

The active-site Nucleophile is serine 107. The active site involves histidine 132.

It belongs to the peptidase S14 family. In terms of assembly, fourteen ClpP subunits assemble into 2 heptameric rings which stack back to back to give a disk-like structure with a central cavity, resembling the structure of eukaryotic proteasomes.

Its subcellular location is the cytoplasm. The catalysed reaction is Hydrolysis of proteins to small peptides in the presence of ATP and magnesium. alpha-casein is the usual test substrate. In the absence of ATP, only oligopeptides shorter than five residues are hydrolyzed (such as succinyl-Leu-Tyr-|-NHMec, and Leu-Tyr-Leu-|-Tyr-Trp, in which cleavage of the -Tyr-|-Leu- and -Tyr-|-Trp bonds also occurs).. In terms of biological role, cleaves peptides in various proteins in a process that requires ATP hydrolysis. Has a chymotrypsin-like activity. Plays a major role in the degradation of misfolded proteins. In Methylobacterium radiotolerans (strain ATCC 27329 / DSM 1819 / JCM 2831 / NBRC 15690 / NCIMB 10815 / 0-1), this protein is ATP-dependent Clp protease proteolytic subunit.